Reading from the N-terminus, the 224-residue chain is Endonuclease NucS (224 aa).

This sequence belongs to the NucS endonuclease family.

The protein localises to the cytoplasm. In terms of biological role, cleaves both 3' and 5' ssDNA extremities of branched DNA structures. The sequence is that of Endonuclease NucS from Rhodococcus jostii (strain RHA1).